A 115-amino-acid polypeptide reads, in one-letter code: Ribosome-binding factor A (115 aa).

The protein belongs to the RbfA family. Monomer. Binds 30S ribosomal subunits, but not 50S ribosomal subunits or 70S ribosomes.

It is found in the cytoplasm. In terms of biological role, one of several proteins that assist in the late maturation steps of the functional core of the 30S ribosomal subunit. Associates with free 30S ribosomal subunits (but not with 30S subunits that are part of 70S ribosomes or polysomes). Required for efficient processing of 16S rRNA. May interact with the 5'-terminal helix region of 16S rRNA. This chain is Ribosome-binding factor A, found in Staphylococcus carnosus (strain TM300).